Reading from the N-terminus, the 218-residue chain is Lactosylceramide 4-alpha-galactosyltransferase (218 aa).

Residues 57–59 (DTD) carry the DXD motif motif.

It belongs to the glycosyltransferase 32 family.

The protein localises to the golgi apparatus membrane. The enzyme catalyses a beta-D-Gal-(1-&gt;4)-beta-D-Glc-(1&lt;-&gt;1)-Cer(d18:1(4E)) + UDP-alpha-D-galactose = a globoside Gb3Cer (d18:1(4E)) + UDP + H(+). It carries out the reaction a beta-D-Gal-(1&lt;-&gt;1')-ceramide + UDP-alpha-D-galactose = alpha-D-Gal-(1-&gt;4)-beta-D-Gal-(1&lt;-&gt;1')-Cer + UDP + H(+). The protein operates within glycolipid biosynthesis. Catalyzes the transfer of galactose from UDP-alpha-D-galactose to lactosylceramide/beta-D-galactosyl-(1-&gt;4)-beta-D-glucosyl-(1&lt;-&gt;1)-ceramide(d18:1(4E)) to produce globotriaosylceramide/globoside Gb3Cer (d18:1(4E)). Also able to transfer galactose to galactosylceramide/beta-D-Gal-(1&lt;-&gt;1')-Cer. Globoside Gb3Cer is a glycosphingolipid of the globo serie, one of the major types of neutral root structures of glycosphingolipids, that constitute a significant portion of mammalian cell membranes. In Pongo pygmaeus (Bornean orangutan), this protein is Lactosylceramide 4-alpha-galactosyltransferase (A4GALT).